The primary structure comprises 318 residues: Solute carrier family 25 member 34 (318 aa).

Solcar repeat units lie at residues 18 to 111, 115 to 208, and 218 to 309; these read VSPA…ACQA, QQPG…AKAW, and DSWL…LRKL. 6 consecutive transmembrane segments (helical) span residues 21–41, 59–79, 112–134, 184–205, 220–240, and 292–315; these read AVDL…TNPL, TYPR…RADG, GLTQ…GAFV, VGAA…FTSA, WLAT…VMAP, and LGPH…RAQH.

It belongs to the mitochondrial carrier (TC 2.A.29) family.

Its subcellular location is the mitochondrion inner membrane. It carries out the reaction a dicarboxylate(in) + sulfate(out) = a dicarboxylate(out) + sulfate(in). Functionally, putative antiporter that exchanges dicarboxylates and sulfur oxoanions across the inner membrane of mitochondria. The polypeptide is Solute carrier family 25 member 34 (Slc25a34) (Rattus norvegicus (Rat)).